The chain runs to 99 residues: Ribosomal processing cysteine protease Prp (99 aa).

The Proton donor role is filled by His-16. The active-site Nucleophile is the Cys-28.

It belongs to the Prp family. In terms of assembly, homodimer.

In terms of biological role, an essential cysteine protease that cleaves the N-terminus from ribosomal protein bL27. The protein is Ribosomal processing cysteine protease Prp of Mycoplasma genitalium (strain ATCC 33530 / DSM 19775 / NCTC 10195 / G37) (Mycoplasmoides genitalium).